Consider the following 58-residue polypeptide: UPF0391 membrane protein COXBURSA331_A2131 (58 aa).

2 consecutive transmembrane segments (helical) span residues 3-23 and 30-50; these read FWVL…FTGI and IAKI…IAML.

The protein belongs to the UPF0391 family.

It is found in the cell membrane. This Coxiella burnetii (strain RSA 331 / Henzerling II) protein is UPF0391 membrane protein COXBURSA331_A2131.